Here is a 37-residue protein sequence, read N- to C-terminus: Photosystem II reaction center protein T (37 aa).

Residues 3–23 (ALVYTFLLVSTLGILFFAIFF) form a helical membrane-spanning segment.

This sequence belongs to the PsbT family. In terms of assembly, PSII is composed of 1 copy each of membrane proteins PsbA, PsbB, PsbC, PsbD, PsbE, PsbF, PsbH, PsbI, PsbJ, PsbK, PsbL, PsbM, PsbT, PsbY, PsbZ, Psb30/Ycf12, at least 3 peripheral proteins of the oxygen-evolving complex and a large number of cofactors. It forms dimeric complexes.

It localises to the plastid. Its subcellular location is the chloroplast thylakoid membrane. In terms of biological role, found at the monomer-monomer interface of the photosystem II (PS II) dimer, plays a role in assembly and dimerization of PSII. PSII is a light-driven water plastoquinone oxidoreductase, using light energy to abstract electrons from H(2)O, generating a proton gradient subsequently used for ATP formation. The protein is Photosystem II reaction center protein T of Ephedra sinica (Chinese ephedra).